Here is a 225-residue protein sequence, read N- to C-terminus: NAD(P)H-quinone oxidoreductase subunit K, chloroplastic (225 aa).

Cys-43, Cys-44, Cys-108, and Cys-139 together coordinate [4Fe-4S] cluster.

This sequence belongs to the complex I 20 kDa subunit family. In terms of assembly, NDH is composed of at least 16 different subunits, 5 of which are encoded in the nucleus. [4Fe-4S] cluster serves as cofactor.

The protein resides in the plastid. The protein localises to the chloroplast thylakoid membrane. The enzyme catalyses a plastoquinone + NADH + (n+1) H(+)(in) = a plastoquinol + NAD(+) + n H(+)(out). The catalysed reaction is a plastoquinone + NADPH + (n+1) H(+)(in) = a plastoquinol + NADP(+) + n H(+)(out). Its function is as follows. NDH shuttles electrons from NAD(P)H:plastoquinone, via FMN and iron-sulfur (Fe-S) centers, to quinones in the photosynthetic chain and possibly in a chloroplast respiratory chain. The immediate electron acceptor for the enzyme in this species is believed to be plastoquinone. Couples the redox reaction to proton translocation, and thus conserves the redox energy in a proton gradient. This is NAD(P)H-quinone oxidoreductase subunit K, chloroplastic from Arabis hirsuta (Hairy rock-cress).